We begin with the raw amino-acid sequence, 260 residues long: MAKEWGYADHNGPDHWHELYPIAKGDNQSPIELHTKDIKHDPSLLPWTASYDPGSAKTILNNGKTCRVVFDDTYDRSMLRGGPLTAAYRLRQFHLHWGSSDDHGSEHTVDGVKYAAELHLVHWNSKYNSFATALKHPDGVAVVGIFLKIGREKGEFQLVLDALDKIKTKGKEAPFTNFNPSCLFPACRDYWTYHGSFTTPPCEECIVWLLLKEPITVSSDQMAKLRSLYSSAENEPPVPLVRNWRPPQPIKGRIVKASFK.

An N-acetylalanine modification is found at A2. The 257-residue stretch at 3–259 (KEWGYADHNG…IKGRIVKASF (257 aa)) folds into the Alpha-carbonic anhydrase domain. Phosphoserine is present on residues S29, S43, S50, and S55. Residues 64 to 67 (KTCR) are involved in proton transfer. T73 bears the Phosphothreonine mark. Zn(2+) is bound by residues H94, H96, and H119. Position 127 is a phosphotyrosine (Y127). T176 carries the post-translational modification Phosphothreonine. An S-glutathionyl cysteine mark is found at C182 and C187. 198–199 (TT) provides a ligand contact to substrate. Position 216 is a phosphothreonine (T216). Position 219 is a phosphoserine (S219).

This sequence belongs to the alpha-carbonic anhydrase family. Zn(2+) is required as a cofactor. Post-translationally, S-thiolated both by thiol-disulfide exchange with glutathione disulfide and by oxyradical-initiated S-thiolation with reduced glutathione. In terms of processing, S-glutathionylated in hepatocytes under oxidative stress.

It localises to the cytoplasm. It carries out the reaction hydrogencarbonate + H(+) = CO2 + H2O. With respect to regulation, inhibited by acetazolamide. In terms of biological role, reversible hydration of carbon dioxide. The protein is Carbonic anhydrase 3 of Sus scrofa (Pig).